Consider the following 182-residue polypeptide: Sec-independent protein translocase protein TatB (182 aa).

A helical transmembrane segment spans residues 1 to 21 (MFDIGFSELLLVFVIGLIVLG). Disordered stretches follow at residues 88–107 (AAES…ASDE) and 121–182 (TQHE…SDKP). Residues 168–182 (AAPVVESSPSSSDKP) are compositionally biased toward low complexity.

Belongs to the TatB family. The Tat system comprises two distinct complexes: a TatABC complex, containing multiple copies of TatA, TatB and TatC subunits, and a separate TatA complex, containing only TatA subunits. Substrates initially bind to the TatABC complex, which probably triggers association of the separate TatA complex to form the active translocon.

The protein resides in the cell inner membrane. Its function is as follows. Part of the twin-arginine translocation (Tat) system that transports large folded proteins containing a characteristic twin-arginine motif in their signal peptide across membranes. Together with TatC, TatB is part of a receptor directly interacting with Tat signal peptides. TatB may form an oligomeric binding site that transiently accommodates folded Tat precursor proteins before their translocation. This chain is Sec-independent protein translocase protein TatB, found in Salmonella typhi.